Reading from the N-terminus, the 288-residue chain is Diaminopimelate epimerase (288 aa).

3 residues coordinate substrate: asparagine 13, glutamine 46, and asparagine 66. The active-site Proton donor is the cysteine 75. Substrate is bound by residues 76–77 (GN), asparagine 166, asparagine 199, and 217–218 (ER). Cysteine 226 serves as the catalytic Proton acceptor. 227–228 (GT) contributes to the substrate binding site.

This sequence belongs to the diaminopimelate epimerase family. In terms of assembly, homodimer.

Its subcellular location is the cytoplasm. It carries out the reaction (2S,6S)-2,6-diaminopimelate = meso-2,6-diaminopimelate. The protein operates within amino-acid biosynthesis; L-lysine biosynthesis via DAP pathway; DL-2,6-diaminopimelate from LL-2,6-diaminopimelate: step 1/1. Catalyzes the stereoinversion of LL-2,6-diaminopimelate (L,L-DAP) to meso-diaminopimelate (meso-DAP), a precursor of L-lysine and an essential component of the bacterial peptidoglycan. The protein is Diaminopimelate epimerase of Cupriavidus metallidurans (strain ATCC 43123 / DSM 2839 / NBRC 102507 / CH34) (Ralstonia metallidurans).